The chain runs to 120 residues: UPF0295 protein Aflv_0370 (120 aa).

2 consecutive transmembrane segments (helical) span residues Ile-12 to Phe-32 and Leu-42 to Gly-62.

The protein belongs to the UPF0295 family.

It localises to the cell membrane. The chain is UPF0295 protein Aflv_0370 from Anoxybacillus flavithermus (strain DSM 21510 / WK1).